The sequence spans 202 residues: Imidazoleglycerol-phosphate dehydratase (202 aa).

The protein belongs to the imidazoleglycerol-phosphate dehydratase family.

Its subcellular location is the cytoplasm. The enzyme catalyses D-erythro-1-(imidazol-4-yl)glycerol 3-phosphate = 3-(imidazol-4-yl)-2-oxopropyl phosphate + H2O. The protein operates within amino-acid biosynthesis; L-histidine biosynthesis; L-histidine from 5-phospho-alpha-D-ribose 1-diphosphate: step 6/9. The polypeptide is Imidazoleglycerol-phosphate dehydratase (Rhizobium meliloti (strain 1021) (Ensifer meliloti)).